We begin with the raw amino-acid sequence, 136 residues long: Large ribosomal subunit protein uL16c (136 aa).

This sequence belongs to the universal ribosomal protein uL16 family. Part of the 50S ribosomal subunit.

The protein resides in the plastid. Its subcellular location is the chloroplast. The protein is Large ribosomal subunit protein uL16c of Citrus sinensis (Sweet orange).